The primary structure comprises 439 residues: Serine/threonine-protein kinase 2 (439 aa).

Positions 87–439 constitute a Protein kinase domain; that stretch reads NDDFYHISTG…IFSDWINGGN (353 aa). Residues 93–101 and Lys-117 each bind ATP; that span reads ISTGGYGIV. The active-site Proton acceptor is Asp-307.

Belongs to the protein kinase superfamily. Ser/Thr protein kinase family. In terms of processing, phosphorylated in vivo. Autophosphorylated in vitro.

It is found in the host endoplasmic reticulum. The protein resides in the host endoplasmic reticulum-Golgi intermediate compartment. It catalyses the reaction L-seryl-[protein] + ATP = O-phospho-L-seryl-[protein] + ADP + H(+). The enzyme catalyses L-threonyl-[protein] + ATP = O-phospho-L-threonyl-[protein] + ADP + H(+). Essential serine-protein kinase involved in the early stage of virion morphogenesis. This Vaccinia virus (strain Tian Tan) (VACV) protein is Serine/threonine-protein kinase 2 (OPG054).